Consider the following 211-residue polypeptide: Pyridoxine/pyridoxamine 5'-phosphate oxidase (211 aa).

Substrate contacts are provided by residues 7-10 (RREY) and lysine 65. Residues 60 to 65 (RIVLLK), 75 to 76 (FT), lysine 82, and glutamine 104 each bind FMN. Residues tyrosine 122, arginine 126, and serine 130 each contribute to the substrate site. FMN contacts are provided by residues 139-140 (QS) and tryptophan 184. A substrate-binding site is contributed by 190-192 (RLH). Residue arginine 194 coordinates FMN.

Belongs to the pyridoxamine 5'-phosphate oxidase family. In terms of assembly, homodimer. Requires FMN as cofactor.

It catalyses the reaction pyridoxamine 5'-phosphate + O2 + H2O = pyridoxal 5'-phosphate + H2O2 + NH4(+). The enzyme catalyses pyridoxine 5'-phosphate + O2 = pyridoxal 5'-phosphate + H2O2. Its pathway is cofactor metabolism; pyridoxal 5'-phosphate salvage; pyridoxal 5'-phosphate from pyridoxamine 5'-phosphate: step 1/1. The protein operates within cofactor metabolism; pyridoxal 5'-phosphate salvage; pyridoxal 5'-phosphate from pyridoxine 5'-phosphate: step 1/1. Its function is as follows. Catalyzes the oxidation of either pyridoxine 5'-phosphate (PNP) or pyridoxamine 5'-phosphate (PMP) into pyridoxal 5'-phosphate (PLP). This is Pyridoxine/pyridoxamine 5'-phosphate oxidase from Teredinibacter turnerae (strain ATCC 39867 / T7901).